A 102-amino-acid polypeptide reads, in one-letter code: Large ribosomal subunit protein bL21 (102 aa).

This sequence belongs to the bacterial ribosomal protein bL21 family. In terms of assembly, part of the 50S ribosomal subunit. Contacts protein L20.

Functionally, this protein binds to 23S rRNA in the presence of protein L20. The protein is Large ribosomal subunit protein bL21 of Stenotrophomonas maltophilia (strain K279a).